A 493-amino-acid polypeptide reads, in one-letter code: Xaa-Pro dipeptidase (493 aa).

An N-acetylalanine modification is found at A2. Residue S167 is modified to Phosphoserine. Position 255 (H255) interacts with a dipeptide. Mn(2+) contacts are provided by D276, D287, and H370. Residue D287 coordinates a dipeptide. H377 and R398 together coordinate a dipeptide. Residues E412 and E452 each contribute to the Mn(2+) site.

The protein belongs to the peptidase M24B family. Eukaryotic-type prolidase subfamily. As to quaternary structure, homodimer. It depends on Mn(2+) as a cofactor.

The catalysed reaction is Xaa-L-Pro dipeptide + H2O = an L-alpha-amino acid + L-proline. Its activity is regulated as follows. Specifically inhibited by the pseudodipeptide CQ31. Inhibition by CQ31 indirectly activates the CARD8 inflammasome: dipeptide accumulation following PEPD inactivation weaky inhibit dipeptidyl peptidases DDP8 and DPP9, relieving DPP8- and/or DPP9-mediated inhibition of CARD8. Dipeptidase that catalyzes the hydrolysis of dipeptides with a prolyl (Xaa-Pro) or hydroxyprolyl residue in the C-terminal position. The preferred dipeptide substrate is Gly-Pro, but other Xaa-Pro dipeptides, such as Ala-Pro, Met-Pro, Phe-Pro, Val-Pro and Leu-Pro, can be cleaved. Plays an important role in collagen metabolism because the high level of iminoacids in collagen. This chain is Xaa-Pro dipeptidase, found in Homo sapiens (Human).